Here is a 37-residue protein sequence, read N- to C-terminus: Large ribosomal subunit protein bL36c (37 aa).

It belongs to the bacterial ribosomal protein bL36 family.

It localises to the plastid. It is found in the chloroplast. The sequence is that of Large ribosomal subunit protein bL36c from Cryptomeria japonica (Japanese cedar).